The sequence spans 1511 residues: Pleiotropic ABC efflux transporter of multiple drugs (1511 aa).

A compositionally biased stretch (polar residues) spans 1–14 (MPEAKLNNNVNDVT). The interval 1–32 (MPEAKLNNNVNDVTSYSSASSSTENAADLHNY) is disordered. The Cytoplasmic portion of the chain corresponds to 1-517 (MPEAKLNNNV…LLIRNMWRLR (517 aa)). Serine 22 carries the post-translational modification Phosphoserine. Phosphothreonine occurs at positions 49 and 51. The tract at residues 52-71 (AQSMQNSTQSAPNKSDAQSI) is disordered. Serine 54, serine 58, and serine 61 each carry phosphoserine. The ABC transporter 1 domain maps to 161 to 410 (LRKFQRSKET…FEDMGYVCPS (250 aa)). A helical membrane pass occupies residues 518 to 542 (NNIGFTLFMILGNCSMALILGSMFF). Residues 543–558 (KIMKKGDTSTFYFRGS) lie on the Extracellular side of the membrane. Residues 559 to 579 (AMFFAILFNAFSSLLEIFSLY) form a helical membrane-spanning segment. Over 580–611 (EARPITEKHRTYSLYHPSADAFASVLSEIPSK) the chain is Cytoplasmic. A helical transmembrane segment spans residues 612–628 (LIIAVCFNIIFYFLVDF). Topologically, residues 629–631 (RRN) are extracellular. Residues 632 to 650 (GGVFFFYLLINIVAVFSMS) traverse the membrane as a helical segment. The Cytoplasmic portion of the chain corresponds to 651 to 665 (HLFRCVGSLTKTLSE). The chain crosses the membrane as a helical span at residues 666–685 (AMVPASMLLLALSMYTGFAI). Residues 686 to 774 (PKKKILRWSK…QYYHKDKWRG (89 aa)) are Extracellular-facing. N-linked (GlcNAc...) asparagine glycosylation is present at asparagine 734. The helical transmembrane segment at 775–793 (FGIGMAYVVFFFFVYLFLC) threads the bilayer. At 794 to 1237 (EYNEGAKQKG…GTSLQGLQNQ (444 aa)) the chain is on the cytoplasmic side. The tract at residues 824 to 858 (EKNANDPENVGERSDLSSDRKMLQESSEEESDTYG) is disordered. Lysine 825 is covalently cross-linked (Glycyl lysine isopeptide (Lys-Gly) (interchain with G-Cter in ubiquitin)). Residues 833–846 (VGERSDLSSDRKML) show a composition bias toward basic and acidic residues. Residues serine 837, serine 840, serine 841, serine 849, serine 850, and serine 854 each carry the phosphoserine modification. Residues 869 to 1112 (FHWRNLCYEV…MIDYFESHGA (244 aa)) form the ABC transporter 2 domain. An ATP-binding site is contributed by 905 to 912 (GASGAGKT). Residues 1238-1260 (MLAVFMFTVIFNPILQQYLPSFV) form a helical membrane-spanning segment. Over 1261–1291 (QQRDLYEARERPSRTFSWISFIFAQIFVEVP) the chain is Extracellular. The helical transmembrane segment at 1292 to 1313 (WNILAGTIAYFIYYYPIGFYSN) threads the bilayer. The Cytoplasmic portion of the chain corresponds to 1314 to 1324 (ASAAGQLHERG). A helical membrane pass occupies residues 1325-1349 (ALFWLFSCAFYVYVGSMGLLVISFN). Residues 1350–1354 (QVAES) lie on the Extracellular side of the membrane. Residues 1355–1379 (AANLASLLFTMSLSFCGVMTTPSAM) form a helical membrane-spanning segment. The Cytoplasmic portion of the chain corresponds to 1380–1388 (PRFWIFMYR). Residues 1389-1407 (VSPLTYFIQALLAVGVANV) form a helical membrane-spanning segment. The Extracellular segment spans residues 1408 to 1476 (DVKCADYELL…VNSFYSERWR (69 aa)). N-linked (GlcNAc...) asparagine glycosylation occurs at asparagine 1447. The chain crosses the membrane as a helical span at residues 1477-1499 (NYGIFICYIAFNYIAGVFFYWLA). The Cytoplasmic portion of the chain corresponds to 1500-1511 (RVPKKNGKLSKK).

Belongs to the ABC transporter superfamily. ABCG family. PDR (TC 3.A.1.205) subfamily. Post-translationally, ubiquitinylation mediates endocytosis and vacuolar degradation. Phosphorylation by casein kinase I stabilizes the protein half-life.

The protein localises to the cell membrane. FK506, isonitrile, enniatin, RU49953, kitasatospora E420, staurosporine CGP42700, prenyl-flavonoids, D-octapeptides were found to be inhibitors in vivo. Vanadate and oligomycin were found to be inhibitors in vitro. In terms of biological role, active efflux of weakly charged organic compounds of 90 cubic Angstroms to 300 cubic Angstroms surface volume. Confers resistance to numerous chemicals including cycloheximide, sulfomethuron methyl, steroids, antiseptics, antibiotics, anticancer, herbicides, mycotoxins, insecticides, ionophores, alkaloids, flavonoids, phenothiazines, organotin compounds, carbazoles, lysosomotropic aminoesters, detergents, rhodamines and other fluorophores, azoles and other antifungals. Exhibits nucleoside triphosphatase activity. In Saccharomyces cerevisiae (strain ATCC 204508 / S288c) (Baker's yeast), this protein is Pleiotropic ABC efflux transporter of multiple drugs (PDR5).